The chain runs to 210 residues: Orotate phosphoribosyltransferase (210 aa).

5-phospho-alpha-D-ribose 1-diphosphate contacts are provided by residues arginine 97, lysine 101, histidine 103, and 123 to 131 (EDLISTGGS). Serine 127 contacts orotate.

Belongs to the purine/pyrimidine phosphoribosyltransferase family. PyrE subfamily. In terms of assembly, homodimer. Requires Mg(2+) as cofactor.

It carries out the reaction orotidine 5'-phosphate + diphosphate = orotate + 5-phospho-alpha-D-ribose 1-diphosphate. It participates in pyrimidine metabolism; UMP biosynthesis via de novo pathway; UMP from orotate: step 1/2. In terms of biological role, catalyzes the transfer of a ribosyl phosphate group from 5-phosphoribose 1-diphosphate to orotate, leading to the formation of orotidine monophosphate (OMP). This chain is Orotate phosphoribosyltransferase, found in Porphyromonas gingivalis (strain ATCC BAA-308 / W83).